We begin with the raw amino-acid sequence, 284 residues long: Nucleotide-binding protein NMA0948 (284 aa).

ATP is bound at residue 8–15; the sequence is GLSGSGKS. Position 58–61 (58–61) interacts with GTP; sequence DVRS.

This sequence belongs to the RapZ-like family.

In terms of biological role, displays ATPase and GTPase activities. The sequence is that of Nucleotide-binding protein NMA0948 from Neisseria meningitidis serogroup A / serotype 4A (strain DSM 15465 / Z2491).